A 1343-amino-acid chain; its full sequence is ABC multidrug transporter atrD (1343 aa).

Residues 1 to 10 (MSPLETNPLS) are compositionally biased toward polar residues. Residues 1-67 (MSPLETNPLS…HRPKSSSSNN (67 aa)) are disordered. Residues 20–31 (ETSTTEEQASTP) show a composition bias toward low complexity. The N-linked (GlcNAc...) asparagine glycan is linked to asparagine 99. 4 helical membrane passes run 114–134 (ILIMVISTICAIAAGAALPLF), 163–183 (YFVYLGIGEFVTVYVSTVGFI), 235–255 (KVGLTLTALATFVTAFIIAYV), and 263–283 (ICSSTIVALVLTMGGGSQFII). The region spanning 115–403 (LIMVISTICA…VSPNAQAFTN (289 aa)) is the ABC transmembrane type-1 1 domain. Asparagine 309 carries an N-linked (GlcNAc...) asparagine glycan. 2 consecutive transmembrane segments (helical) span residues 339 to 359 (IVMGFMIGAMFGLMYSNYGLG) and 366 to 386 (FLVDGAVDVGDILTVLMAILI). Residues 438–683 (IELRNVKHIY…GGAYRKLVEA (246 aa)) form the ABC transporter 1 domain. ATP is bound at residue 473 to 480 (GPSGSGKS). A glycan (N-linked (GlcNAc...) asparagine) is linked at asparagine 545. Transmembrane regions (helical) follow at residues 773–793 (MLIGLVFSVLAGGGQPTQAVL) and 820–840 (LMFFVVGIIQFITQSTNGAAF). Positions 774–1063 (LIGLVFSVLA…VFSFAPDMGK (290 aa)) constitute an ABC transmembrane type-1 2 domain. Asparagine 872 carries N-linked (GlcNAc...) asparagine glycosylation. 4 helical membrane passes run 887 to 907 (HLSGVSGVTLGTILMTSTTLG), 920 to 942 (LALVCISVVPVLLACGFYRFYML), 1010 to 1030 (ALVFFCVALGFWYGGTLLGHH), and 1037 to 1057 (FFVCFSEILFGAQSAGTVFSF). Asparagine 1083 carries N-linked (GlcNAc...) asparagine glycosylation. Residues 1098–1336 (IEFRNVHFRY…KGRYYELVNL (239 aa)) enclose the ABC transporter 2 domain. Residue 1133–1140 (GPSGCGKS) coordinates ATP.

It belongs to the ABC transporter superfamily. ABCB family. Multidrug resistance exporter (TC 3.A.1.201) subfamily.

The protein localises to the cell membrane. Its activity is regulated as follows. Fenamirol efflux transporter activity is inhibited by the cyclosporin derivative PSC 833, nigericin, reserpine and valinomycin. The effect of reserpine is transiant, while that of the cyclosporin derivative PSC 833, nigericin and valinomycin is proportional to the time of exposure. Cyclohexinmide has inhibitory effect only when applied prior to addition of the fungicide. In terms of biological role, pleiotropic ABC efflux transporter involved in the protection of the cells against a wide range of toxic compounds. Confers resistance to the azole fenarimol via efflux transport. May also be involved in the secretion of penicillin. This is ABC multidrug transporter atrD from Emericella nidulans (strain FGSC A4 / ATCC 38163 / CBS 112.46 / NRRL 194 / M139) (Aspergillus nidulans).